The chain runs to 261 residues: Intermembrane phospholipid transport system permease protein MlaE (261 aa).

At 1 to 12 the chain is on the cytoplasmic side; it reads MIVNFISALGKQ. Residues 13-33 form a helical membrane-spanning segment; the sequence is VIDFFRALGRAGFMLFGALIG. Residues 34–49 lie on the Periplasmic side of the membrane; that stretch reads KPQIRKHFPLLVKQMH. A helical transmembrane segment spans residues 50 to 70; the sequence is VLGVQSLLIILLSGLFIGMVL. Topologically, residues 71-147 are cytoplasmic; sequence GLQGYVVLID…DPLRRVIAPR (77 aa). Residues 148 to 168 traverse the membrane as a helical segment; sequence FWAGVISMPVLSILFIAIGIW. Over 169-198 the chain is Periplasmic; it reads GGSLVGVDWKGVDSGSFWSVMQNSVSWSYD. A helical transmembrane segment spans residues 199-219; that stretch reads ILNGFIKAVFFAVAVTWIALF. Residues 220 to 238 are Cytoplasmic-facing; it reads NGYDCMPTSEGISQATTRT. The helical transmembrane segment at 239-259 threads the bilayer; sequence VVHASLVVLGLDFILTAIMFG. At 260 to 261 the chain is on the periplasmic side; the sequence is AG.

This sequence belongs to the MlaE permease family. In terms of assembly, the complex is composed of two ATP-binding proteins (MlaF), two transmembrane proteins (MlaE), two cytoplasmic solute-binding proteins (MlaB) and six periplasmic solute-binding proteins (MlaD).

It localises to the cell inner membrane. In terms of biological role, part of the ABC transporter complex MlaFEDB, which is involved in a phospholipid transport pathway that maintains lipid asymmetry in the outer membrane by retrograde trafficking of phospholipids from the outer membrane to the inner membrane. Probably responsible for the translocation of the substrate across the membrane. The chain is Intermembrane phospholipid transport system permease protein MlaE from Haemophilus influenzae (strain ATCC 51907 / DSM 11121 / KW20 / Rd).